The chain runs to 65 residues: Weak toxin CM-13b (65 aa).

5 disulfides stabilise this stretch: cysteine 3–cysteine 24, cysteine 6–cysteine 11, cysteine 17–cysteine 42, cysteine 46–cysteine 57, and cysteine 58–cysteine 63.

Belongs to the three-finger toxin family. Ancestral subfamily. Orphan group II sub-subfamily. In terms of tissue distribution, expressed by the venom gland.

It localises to the secreted. In terms of biological role, binds with low affinity to muscular (alpha-1-beta-1-delta-epsilon/CHRNA1-CHRNB1-CHRND-CHRNE) and very low affinity to neuronal (alpha-7/CHRNA7) nicotinic acetylcholine receptor (nAChR). The sequence is that of Weak toxin CM-13b from Naja annulifera (Banded Egyptian cobra).